Reading from the N-terminus, the 614-residue chain is Aspartate--tRNA ligase (614 aa).

Glutamate 174 serves as a coordination point for L-aspartate. Positions 198-201 are aspartate; that stretch reads QLFK. Arginine 220 lines the L-aspartate pocket. ATP is bound by residues 220–222 and glutamine 229; that span reads RDE. Residue histidine 448 participates in L-aspartate binding. Residue glutamate 482 coordinates ATP. Position 489 (arginine 489) interacts with L-aspartate. 534–537 contributes to the ATP binding site; it reads GLDR.

Belongs to the class-II aminoacyl-tRNA synthetase family. Type 1 subfamily. In terms of assembly, homodimer.

It is found in the cytoplasm. The enzyme catalyses tRNA(Asp) + L-aspartate + ATP = L-aspartyl-tRNA(Asp) + AMP + diphosphate. Its function is as follows. Catalyzes the attachment of L-aspartate to tRNA(Asp) in a two-step reaction: L-aspartate is first activated by ATP to form Asp-AMP and then transferred to the acceptor end of tRNA(Asp). The polypeptide is Aspartate--tRNA ligase (Lactobacillus acidophilus (strain ATCC 700396 / NCK56 / N2 / NCFM)).